We begin with the raw amino-acid sequence, 281 residues long: Probable catechol O-methyltransferase 2 (281 aa).

7 residues coordinate S-adenosyl-L-methionine: isoleucine 78, glutamate 100, serine 108, glutamate 127, valine 128, alanine 156, and aspartate 183. Mg(2+) is bound at residue aspartate 183. A substrate-binding site is contributed by lysine 186. Mg(2+)-binding residues include aspartate 211 and asparagine 212. Asparagine 212 provides a ligand contact to substrate.

Belongs to the class I-like SAM-binding methyltransferase superfamily. Cation-dependent O-methyltransferase family. Requires Mg(2+) as cofactor.

The protein resides in the vacuole. It catalyses the reaction a catechol + S-adenosyl-L-methionine = a guaiacol + S-adenosyl-L-homocysteine + H(+). This chain is Probable catechol O-methyltransferase 2, found in Schizosaccharomyces pombe (strain 972 / ATCC 24843) (Fission yeast).